The sequence spans 376 residues: Sulfate/thiosulfate import ATP-binding protein CysA 1 (376 aa).

An ABC transporter domain is found at 3–237 (IRLTNISKKF…PNSRFVFDFL (235 aa)). Position 35–42 (35–42 (GPSGSGKT)) interacts with ATP.

Belongs to the ABC transporter superfamily. Sulfate/tungstate importer (TC 3.A.1.6) family. As to quaternary structure, the complex is composed of two ATP-binding proteins (CysA), two transmembrane proteins (CysT and CysW) and a solute-binding protein (CysP).

It is found in the cell inner membrane. It carries out the reaction sulfate(out) + ATP + H2O = sulfate(in) + ADP + phosphate + H(+). The enzyme catalyses thiosulfate(out) + ATP + H2O = thiosulfate(in) + ADP + phosphate + H(+). In terms of biological role, part of the ABC transporter complex CysAWTP involved in sulfate/thiosulfate import. Responsible for energy coupling to the transport system. The protein is Sulfate/thiosulfate import ATP-binding protein CysA 1 of Shewanella oneidensis (strain ATCC 700550 / JCM 31522 / CIP 106686 / LMG 19005 / NCIMB 14063 / MR-1).